Here is a 218-residue protein sequence, read N- to C-terminus: Adenylate kinase (218 aa).

10-15 serves as a coordination point for ATP; sequence GAGKGT. The interval 30 to 59 is NMP; it reads STGDMLRAAVKAGTPLGIAAKKIMDEGGLV. AMP-binding positions include Thr-31, Arg-36, 57–59, 85–88, and Gln-92; these read GLV and GFPR. An LID region spans residues 122-159; it reads GRRVHPASGRTYHVKFNPPKVAGKDDLTGEELIQRDDD. ATP contacts are provided by residues Arg-123 and 132–133; that span reads TY. Positions 156 and 167 each coordinate AMP. Gly-203 provides a ligand contact to ATP.

This sequence belongs to the adenylate kinase family. Monomer.

The protein localises to the cytoplasm. The catalysed reaction is AMP + ATP = 2 ADP. It participates in purine metabolism; AMP biosynthesis via salvage pathway; AMP from ADP: step 1/1. Functionally, catalyzes the reversible transfer of the terminal phosphate group between ATP and AMP. Plays an important role in cellular energy homeostasis and in adenine nucleotide metabolism. The sequence is that of Adenylate kinase from Janthinobacterium sp. (strain Marseille) (Minibacterium massiliensis).